The following is a 290-amino-acid chain: tRNA pseudouridine synthase A (290 aa).

The Nucleophile role is filled by D56. Y109 serves as a coordination point for substrate.

This sequence belongs to the tRNA pseudouridine synthase TruA family.

The catalysed reaction is uridine(38/39/40) in tRNA = pseudouridine(38/39/40) in tRNA. Its function is as follows. Formation of pseudouridine at positions 38, 39 and 40 in the anticodon stem and loop of transfer RNAs. This is tRNA pseudouridine synthase A from Methanobrevibacter smithii (strain ATCC 35061 / DSM 861 / OCM 144 / PS).